We begin with the raw amino-acid sequence, 1248 residues long: Kinesin-like protein KIN-14I (1248 aa).

Positions 88–244 (FQKDPIPTSL…PAREEIEALL (157 aa)) constitute a MyTH4 domain. The FERM domain occupies 249-563 (LTTIVFFLDE…HINDVMLRRY (315 aa)). The stretch at 586 to 659 (NIEIYEKRVQ…LDKLKSLCDE (74 aa)) forms a coiled coil. The interval 675 to 704 (ETRLKSGQGQESSNRTGVSGNHFERDTLPT) is disordered. The span at 679-693 (KSGQGQESSNRTGVS) shows a compositional bias: polar residues. A coiled-coil region spans residues 708–799 (VNNSIEMLAK…TRSLNVTEST (92 aa)). One can recognise a Kinesin motor domain in the interval 872–1193 (KIRVFCRLRP…LMYASRVRCI (322 aa)). Residue 953-960 (GQTGSGKT) coordinates ATP. A calmodulin-binding region spans residues 1201-1223 (VAPKEIMRLKKLIAYWKEQAGKR). The tract at residues 1220 to 1248 (AGKRSEDDDLEEIQEERTPKEKADNRLTS) is disordered. A compositionally biased stretch (basic and acidic residues) spans 1234–1248 (EERTPKEKADNRLTS).

This sequence belongs to the TRAFAC class myosin-kinesin ATPase superfamily. Kinesin family. KIN-14 subfamily. In terms of assembly, binds microtubules via its N-terminus containing the MyTH4 domain and binds F-actin via its FERM domain. Binding to calmodulin inhibits microtubule binding activity.

The protein resides in the cytoplasm. The protein localises to the cytoskeleton. Functionally, minus-end microtubule-dependent motor protein involved in the regulation of cell division. This is Kinesin-like protein KIN-14I from Oryza sativa subsp. japonica (Rice).